The following is a 333-amino-acid chain: Taste receptor type 2 member 38 (333 aa).

Residues 1–17 (MLTLTRIHTVSYEVRST) are Extracellular-facing. Residues 18-38 (FLFISVLEFAVGFLTNAFVFL) form a helical membrane-spanning segment. Topologically, residues 39–55 (VNFWDVVKRQPLSNSDC) are cytoplasmic. Residues 56 to 76 (VLLCLSISRLFLHGLLFLSAI) traverse the membrane as a helical segment. Topologically, residues 77-94 (QLTHFQKLSEPLNHSYQA) are extracellular. The chain crosses the membrane as a helical span at residues 95 to 115 (INMLWMIANQANLWLAACLSL). The Cytoplasmic segment spans residues 116–142 (LYCSKLIRFSHTFLICLASWVSRKISQ). A helical membrane pass occupies residues 143–163 (MLLGIILCSCICTVLCVWCFF). Topologically, residues 164-190 (SRPHFTVTTVLFMNNNTRLNWQIKDLN) are extracellular. Residue N178 is glycosylated (N-linked (GlcNAc...) asparagine). The chain crosses the membrane as a helical span at residues 191 to 211 (LFYSFLFCYLWSVPPFLLFLV). Topologically, residues 212-251 (SSGMLTVSLGRHMRTMKVYTRDSRDPSLEAHIKALKSLVS) are cytoplasmic. Residues 252-272 (FFCFFVISSCAAFISVPLLIL) form a helical membrane-spanning segment. Residues 273 to 276 (WRDK) are Extracellular-facing. The helical transmembrane segment at 277-297 (IGVMVCVGIMAACPSGHAAVL) threads the bilayer. Residues 298 to 333 (ISGNAKLRRAVTTILLWAQSSLKVRADHKADSRTLC) lie on the Cytoplasmic side of the membrane.

It belongs to the G-protein coupled receptor T2R family.

The protein localises to the membrane. Receptor that may play a role in the perception of bitterness and is gustducin-linked. May play a role in sensing the chemical composition of the gastrointestinal content. The activity of this receptor may stimulate alpha gustducin, mediate PLC-beta-2 activation and lead to the gating of TRPM5. In Pan paniscus (Pygmy chimpanzee), this protein is Taste receptor type 2 member 38 (TAS2R38).